A 281-amino-acid chain; its full sequence is Cytosolic Fe-S cluster assembly factor CFD1 (281 aa).

24–31 contacts ATP; the sequence is GKGGVGKS. 2 residues coordinate [4Fe-4S] cluster: cysteine 201 and cysteine 204.

Belongs to the Mrp/NBP35 ATP-binding proteins family. NUBP2/CFD1 subfamily. Heterotetramer of 2 NBP35 and 2 CFD1 chains. Requires [4Fe-4S] cluster as cofactor.

It is found in the cytoplasm. In terms of biological role, component of the cytosolic iron-sulfur (Fe/S) protein assembly (CIA) machinery. Required for maturation of extramitochondrial Fe-S proteins. The NBP35-CFD1 heterotetramer forms a Fe-S scaffold complex, mediating the de novo assembly of an Fe-S cluster and its transfer to target apoproteins. Required for biogenesis and export of both ribosomal subunits, which may reflect a role in assembly of the Fe/S clusters in RLI1, a protein which performs rRNA processing and ribosome export. This chain is Cytosolic Fe-S cluster assembly factor CFD1, found in Eremothecium gossypii (strain ATCC 10895 / CBS 109.51 / FGSC 9923 / NRRL Y-1056) (Yeast).